Here is a 242-residue protein sequence, read N- to C-terminus: Protein HTATIP2 (242 aa).

Alanine 2 bears the N-acetylalanine mark. The interval 2–25 (ADKEALPKLREDFKMQNKSVFILG) is required for interaction with elongation factor EEF1A1. NADPH-binding residues include serine 27, glycine 28, glutamate 29, threonine 30, arginine 52, arginine 53, leucine 92, glycine 93, tyrosine 143, lysine 147, leucine 170, and arginine 178. Residue tyrosine 143 is the Proton acceptor of the active site. Residue lysine 147 is part of the active site.

Monomer. Forms homodimers during oxidative stress. Interacts (via N-terminus) with elongation factor EEF1A1 (via middle-region); the interaction is direct and competes with EEF1A1 binding to guanyl-nucleotide exchange factor EEF1B2, thereby inhibiting GDP for GTP exchange and reactivation of EEF1A1. Interacts with nuclear transport receptors XPO4, IPO5/RANBP5, IPO7, IPO9 and KPNB1 as well as GCN1L1/GCN1 and LRPPRC probably through their HEAT repeats. Binds NCOA5/CIA.

It is found in the cytoplasm. In terms of biological role, represses translation by preventing reactivation of elongation factor eEF1A. May also inhibit nuclear import by competing with nuclear import substrates for binding to a subset of nuclear transport receptors. Has additionally been proposed to act as a redox sensor involved in cellular oxidative stress surveillance. The protein is Protein HTATIP2 of Mus musculus (Mouse).